Consider the following 339-residue polypeptide: DNA-directed RNA polymerase subunit alpha (339 aa).

The alpha N-terminal domain (alpha-NTD) stretch occupies residues 1-235 (MVIQKNWQEL…DQLQVFVNFE (235 aa)). The segment at 251–339 (FNPALLKKVD…DLAKRFEEHY (89 aa)) is alpha C-terminal domain (alpha-CTD).

It belongs to the RNA polymerase alpha chain family. Homodimer. The RNAP catalytic core consists of 2 alpha, 1 beta, 1 beta' and 1 omega subunit. When a sigma factor is associated with the core the holoenzyme is formed, which can initiate transcription.

It carries out the reaction RNA(n) + a ribonucleoside 5'-triphosphate = RNA(n+1) + diphosphate. In terms of biological role, DNA-dependent RNA polymerase catalyzes the transcription of DNA into RNA using the four ribonucleoside triphosphates as substrates. This is DNA-directed RNA polymerase subunit alpha from Methylobacterium radiotolerans (strain ATCC 27329 / DSM 1819 / JCM 2831 / NBRC 15690 / NCIMB 10815 / 0-1).